The sequence spans 103 residues: Histone H4 (103 aa).

Over residues 1–14 (MTGRGKGGKGLGKG) the composition is skewed to gly residues. The segment at 1–20 (MTGRGKGGKGLGKGGAKRHR) is disordered. 2 positions are modified to N6-acetyl-N6-methyllysine; alternate: Lys-6 and Lys-13. A DNA-binding region spans residues 17-21 (KRHRK).

This sequence belongs to the histone H4 family. The nucleosome is a histone octamer containing two molecules each of H2A, H2B, H3 and H4 assembled in one H3-H4 heterotetramer and two H2A-H2B heterodimers. The octamer wraps approximately 147 bp of DNA.

The protein resides in the nucleus. It is found in the chromosome. Functionally, core component of nucleosome. Nucleosomes wrap and compact DNA into chromatin, limiting DNA accessibility to the cellular machineries which require DNA as a template. Histones thereby play a central role in transcription regulation, DNA repair, DNA replication and chromosomal stability. DNA accessibility is regulated via a complex set of post-translational modifications of histones, also called histone code, and nucleosome remodeling. In Trichogramma cacaeciae (Moth egg parasite), this protein is Histone H4.